A 347-amino-acid polypeptide reads, in one-letter code: NADH-ubiquinone oxidoreductase chain 2 (347 aa).

The next 10 membrane-spanning stretches (helical) occupy residues 13–33 (IVLGTMIVMTSSHWLMIWMGF), 59–79 (YFLTQATASMLLMLAIIINLV), 96–116 (IIMTVALAMKMGLAPFHFWVP), 122–142 (ISLLSGLILLTWQKLAPLSVL), 144–164 (VISPIINLDLLLTMSILSILI), 178–200 (ILAYSSIAHMGWMTSILIFNPMM), 210–232 (LMTATTFTLFMTTSTTTTLALSH), 246–266 (IIMLSLGGLPPLVGFLPKWMI), 276–296 (IILATLMAITALLNLFFYMRL), and 326–346 (LPMLIVLSTMTLPLAPAMILL).

Belongs to the complex I subunit 2 family. Core subunit of respiratory chain NADH dehydrogenase (Complex I) which is composed of 45 different subunits. Interacts with TMEM242.

It is found in the mitochondrion inner membrane. It catalyses the reaction a ubiquinone + NADH + 5 H(+)(in) = a ubiquinol + NAD(+) + 4 H(+)(out). Functionally, core subunit of the mitochondrial membrane respiratory chain NADH dehydrogenase (Complex I) which catalyzes electron transfer from NADH through the respiratory chain, using ubiquinone as an electron acceptor. Essential for the catalytic activity and assembly of complex I. This Rhynchonycteris naso (Brazilian long-nosed bat) protein is NADH-ubiquinone oxidoreductase chain 2.